The primary structure comprises 230 residues: Small ribosomal subunit protein uS3 (230 aa).

Residues 39–107 enclose the KH type-2 domain; it reads VRNYLRQKLA…PVHVNIEEIR (69 aa). A disordered region spans residues 210–230; the sequence is SSKPEHESKQRKAGRRNAAAN.

This sequence belongs to the universal ribosomal protein uS3 family. In terms of assembly, part of the 30S ribosomal subunit. Forms a tight complex with proteins S10 and S14.

Binds the lower part of the 30S subunit head. Binds mRNA in the 70S ribosome, positioning it for translation. In Neisseria meningitidis serogroup C (strain 053442), this protein is Small ribosomal subunit protein uS3.